Consider the following 250-residue polypeptide: Acetoacetate decarboxylase 1 (250 aa).

Catalysis depends on Lys120, which acts as the Schiff-base intermediate with acetoacetate.

It belongs to the ADC family.

It catalyses the reaction acetoacetate + H(+) = acetone + CO2. Catalyzes the conversion of acetoacetate to acetone and carbon dioxide. The protein is Acetoacetate decarboxylase 1 of Bradyrhizobium diazoefficiens (strain JCM 10833 / BCRC 13528 / IAM 13628 / NBRC 14792 / USDA 110).